The following is a 351-amino-acid chain: Photosystem II D2 protein (351 aa).

A helical membrane pass occupies residues 39 to 59; it reads TAYLAVGGWMTGTTFVTSWYT. Chlorophyll a is bound at residue His-116. Residues 123–139 form a helical membrane-spanning segment; that stretch reads GFCLRQFEIARLVGIRP. The pheophytin a site is built by Gln-128 and Asn-141. A helical membrane pass occupies residues 151 to 164; that stretch reads VFVSVFLLYPLGQA. His-196 is a chlorophyll a binding site. Residues 206 to 226 form a helical membrane-spanning segment; that stretch reads GALLCAIHGATVENTLFEDGD. Residues His-213 and Phe-260 each coordinate a plastoquinone. Fe cation is bound at residue His-213. His-267 serves as a coordination point for Fe cation. The chain crosses the membrane as a helical span at residues 277 to 293; it reads GLWTSAIGIVGLALNLR.

Belongs to the reaction center PufL/M/PsbA/D family. In terms of assembly, PSII is composed of 1 copy each of membrane proteins PsbA, PsbB, PsbC, PsbD, PsbE, PsbF, PsbH, PsbI, PsbJ, PsbK, PsbL, PsbM, PsbT, PsbX, PsbY, PsbZ, Psb30/Ycf12, at least 3 peripheral proteins of the oxygen-evolving complex and a large number of cofactors. It forms dimeric complexes. Requires The D1/D2 heterodimer binds P680, chlorophylls that are the primary electron donor of PSII, and subsequent electron acceptors. It shares a non-heme iron and each subunit binds pheophytin, quinone, additional chlorophylls, carotenoids and lipids. There is also a Cl(-1) ion associated with D1 and D2, which is required for oxygen evolution. The PSII complex binds additional chlorophylls, carotenoids and specific lipids. as cofactor.

Its subcellular location is the plastid. It localises to the chloroplast thylakoid membrane. The enzyme catalyses 2 a plastoquinone + 4 hnu + 2 H2O = 2 a plastoquinol + O2. Functionally, photosystem II (PSII) is a light-driven water:plastoquinone oxidoreductase that uses light energy to abstract electrons from H(2)O, generating O(2) and a proton gradient subsequently used for ATP formation. It consists of a core antenna complex that captures photons, and an electron transfer chain that converts photonic excitation into a charge separation. The D1/D2 (PsbA/PsbD) reaction center heterodimer binds P680, the primary electron donor of PSII as well as several subsequent electron acceptors. D2 is needed for assembly of a stable PSII complex. The protein is Photosystem II D2 protein of Phaeodactylum tricornutum (strain CCAP 1055/1).